We begin with the raw amino-acid sequence, 368 residues long: ICEBs1 integrase (368 aa).

Positions 61 to 143 constitute a Core-binding (CB) domain; the sequence is VSFPTLISIY…SLSKIFDTAV (83 aa). The 199-residue stretch at 164-362 folds into the Tyr recombinase domain; that stretch reads KKMKFWRPEE…YPNKQKEMAD (199 aa). Catalysis depends on residues Arg201, Lys239, His313, Arg316, and His339. The active-site O-(3'-phospho-DNA)-tyrosine intermediate is the Tyr349.

This sequence belongs to the 'phage' integrase family.

In terms of biological role, putative integrase that is involved in the insertion of the integrative and conjugative element ICEBs1. Required for the excision of ICEBs1 from the donor cell genome and subsequent integration in the recipient cell genome. Appears not to be transferred through the mating pore. Integration of ICEBs1 involves an attachment site in the chromosome, attB, and a site in the circular form of ICEBs1, attICEBs1. This Bacillus subtilis (strain 168) protein is ICEBs1 integrase (int).